The sequence spans 266 residues: Glutamate racemase (266 aa).

Substrate is bound by residues 9-10 (DS) and 41-42 (YG). Cys72 functions as the Proton donor/acceptor in the catalytic mechanism. Residue 73–74 (NT) participates in substrate binding. Cys183 serves as the catalytic Proton donor/acceptor. 184–185 (TH) is a binding site for substrate.

Belongs to the aspartate/glutamate racemases family.

The catalysed reaction is L-glutamate = D-glutamate. Its pathway is cell wall biogenesis; peptidoglycan biosynthesis. In terms of biological role, provides the (R)-glutamate required for cell wall biosynthesis. The protein is Glutamate racemase of Listeria monocytogenes serotype 4b (strain CLIP80459).